The primary structure comprises 91 residues: Peptide Ctry2146 (91 aa).

An N-terminal signal peptide occupies residues 1-23 (MKTQTLLVTFLVVLLMVATQTEA). Residue Leu-33 is modified to Leucine amide. A propeptide spanning residues 37 to 91 (GLLDGLLGKRGLLFGKRGPLFGKRALTNQDFLDFAYDPSLSAADMDALEMLFEDY) is cleaved from the precursor.

It belongs to the non-disulfide-bridged peptide (NDBP) superfamily. Short antimicrobial peptide (group 4) family. In terms of tissue distribution, expressed by the venom gland.

The protein resides in the secreted. It is found in the target cell membrane. In terms of biological role, antimicrobial peptide. This Chaerilus tryznai (Scorpion) protein is Peptide Ctry2146.